We begin with the raw amino-acid sequence, 357 residues long: Protein RecA (357 aa).

Position 69–76 (69–76) interacts with ATP; sequence GPESSGKT. The interval 337 to 357 is disordered; it reads SANSVAKNNEDDEDEDVEEEE. Residues 346–357 are compositionally biased toward acidic residues; that stretch reads EDDEDEDVEEEE.

It belongs to the RecA family.

The protein resides in the cytoplasm. Can catalyze the hydrolysis of ATP in the presence of single-stranded DNA, the ATP-dependent uptake of single-stranded DNA by duplex DNA, and the ATP-dependent hybridization of homologous single-stranded DNAs. It interacts with LexA causing its activation and leading to its autocatalytic cleavage. This is Protein RecA from Nostoc sp. (strain PCC 7120 / SAG 25.82 / UTEX 2576).